The following is a 609-amino-acid chain: Putative transcriptional regulatory protein y4pA (609 aa).

One can recognise a Sigma-54 factor interaction domain in the interval 313-533; sequence IVGRSPSIQQ…LRSVLETAAI (221 aa). ATP is bound at residue 395 to 404; sequence HPKATLLIES. The H-T-H motif DNA-binding region spans 578 to 597; that stretch reads RGEAARYLGISRKTLYNKMR.

Probable transcriptional regulator that acts in conjunction with sigma-54. This Sinorhizobium fredii (strain NBRC 101917 / NGR234) protein is Putative transcriptional regulatory protein y4pA.